Reading from the N-terminus, the 95-residue chain is Large ribosomal subunit protein bL27 (95 aa).

A propeptide spanning residues 1 to 10 is cleaved from the precursor; that stretch reads MRFILNLQFF.

It belongs to the bacterial ribosomal protein bL27 family. Post-translationally, the N-terminus is cleaved by ribosomal processing cysteine protease Prp.

The sequence is that of Large ribosomal subunit protein bL27 from Mesoplasma florum (strain ATCC 33453 / NBRC 100688 / NCTC 11704 / L1) (Acholeplasma florum).